Reading from the N-terminus, the 312-residue chain is Taste receptor type 2 member 7 (312 aa).

The Extracellular segment spans residues 1-9 (MTYETDTTL). A helical membrane pass occupies residues 10-30 (MLVAVGEALVGILGNAFIALV). Over 31–49 (NFMGWMKNRKIASIDLILS) the chain is Cytoplasmic. A helical membrane pass occupies residues 50–70 (SVAMSRICLQCIILLDCIILV). Residues 71 to 101 (QYPDTYNRGKEMRTVDFFWTLTNHLSVWFAT) lie on the Extracellular side of the membrane. A helical transmembrane segment spans residues 102 to 122 (CLSIFYLFKIANFFHPLFLWI). Over 123 to 128 (KWRIDK) the chain is Cytoplasmic. Residues 129–149 (LILRTLLACVIISLCFSLPVT) form a helical membrane-spanning segment. At 150-187 (ENLSDDFRRCVKTKERINSTLRCKVNKAGHASVKVNLN) the chain is on the extracellular side. Asparagine 151 and asparagine 167 each carry an N-linked (GlcNAc...) asparagine glycan. The chain crosses the membrane as a helical span at residues 188–208 (LVMLFPFSVSLVSFLLLILSL). Residues 209–235 (WRHTRQIQLSVTGYKDPSTTAHVKAMK) are Cytoplasmic-facing. A helical membrane pass occupies residues 236-256 (AVISFLALFVVYCLAFLIATS). The Extracellular portion of the chain corresponds to 257 to 266 (SYFMPESELA). A helical transmembrane segment spans residues 267 to 287 (VIWGELIALIYPSSHSFILIL). Residues 288 to 312 (GSSKLKQASVRVLCRVKTMLKGKKY) are Cytoplasmic-facing.

Belongs to the G-protein coupled receptor T2R family. In terms of tissue distribution, expressed in subsets of taste receptor cells of the tongue and palate epithelium and exclusively in gustducin-positive cells. Expressed in 15% taste bud cells in circumvallate and foliate papillae but only in 2% in fungiform papillae. Expressed in gastric and duodenal tissues.

It is found in the membrane. Gustducin-coupled receptor implicated in the perception of bitter compounds in the oral cavity and the gastrointestinal tract. Signals through PLCB2 and the calcium-regulated cation channel TRPM5. The polypeptide is Taste receptor type 2 member 7 (Tas2r7) (Mus musculus (Mouse)).